We begin with the raw amino-acid sequence, 448 residues long: Serine--tRNA ligase (448 aa).

An L-serine-binding site is contributed by 246–248; that stretch reads TAE. ATP contacts are provided by residues 277-279 and Val-293; that span reads RKE. Glu-300 provides a ligand contact to L-serine. 364–367 is a binding site for ATP; sequence ELAS. Thr-399 is a binding site for L-serine.

It belongs to the class-II aminoacyl-tRNA synthetase family. Type-1 seryl-tRNA synthetase subfamily. As to quaternary structure, homodimer. The tRNA molecule binds across the dimer.

Its subcellular location is the cytoplasm. It catalyses the reaction tRNA(Ser) + L-serine + ATP = L-seryl-tRNA(Ser) + AMP + diphosphate + H(+). The catalysed reaction is tRNA(Sec) + L-serine + ATP = L-seryl-tRNA(Sec) + AMP + diphosphate + H(+). The protein operates within aminoacyl-tRNA biosynthesis; selenocysteinyl-tRNA(Sec) biosynthesis; L-seryl-tRNA(Sec) from L-serine and tRNA(Sec): step 1/1. In terms of biological role, catalyzes the attachment of serine to tRNA(Ser). Is also able to aminoacylate tRNA(Sec) with serine, to form the misacylated tRNA L-seryl-tRNA(Sec), which will be further converted into selenocysteinyl-tRNA(Sec). The chain is Serine--tRNA ligase from Pyrobaculum islandicum (strain DSM 4184 / JCM 9189 / GEO3).